The chain runs to 500 residues: UDP-N-acetylmuramoyl-L-alanyl-D-glutamate--2,6-diaminopimelate ligase (500 aa).

Serine 38 contacts UDP-N-acetyl-alpha-D-muramoyl-L-alanyl-D-glutamate. An ATP-binding site is contributed by 118 to 124 (GTNGKTS). UDP-N-acetyl-alpha-D-muramoyl-L-alanyl-D-glutamate contacts are provided by residues 160-161 (TT), serine 187, and arginine 195. Residue lysine 227 is modified to N6-carboxylysine. Residues arginine 395, 419–422 (DNPR), glycine 471, and glutamate 475 each bind meso-2,6-diaminopimelate. The Meso-diaminopimelate recognition motif signature appears at 419–422 (DNPR).

It belongs to the MurCDEF family. MurE subfamily. It depends on Mg(2+) as a cofactor. Carboxylation is probably crucial for Mg(2+) binding and, consequently, for the gamma-phosphate positioning of ATP.

It localises to the cytoplasm. It catalyses the reaction UDP-N-acetyl-alpha-D-muramoyl-L-alanyl-D-glutamate + meso-2,6-diaminopimelate + ATP = UDP-N-acetyl-alpha-D-muramoyl-L-alanyl-gamma-D-glutamyl-meso-2,6-diaminopimelate + ADP + phosphate + H(+). Its pathway is cell wall biogenesis; peptidoglycan biosynthesis. Catalyzes the addition of meso-diaminopimelic acid to the nucleotide precursor UDP-N-acetylmuramoyl-L-alanyl-D-glutamate (UMAG) in the biosynthesis of bacterial cell-wall peptidoglycan. The sequence is that of UDP-N-acetylmuramoyl-L-alanyl-D-glutamate--2,6-diaminopimelate ligase from Leptospira borgpetersenii serovar Hardjo-bovis (strain L550).